A 61-amino-acid polypeptide reads, in one-letter code: MKFLGVKVYRFPLVKYYWPFFVGFGLTFYGVAKIQNAMMDTAEFINDPRHPRFKKGDLEKK.

The helical transmembrane segment at 13–32 (LVKYYWPFFVGFGLTFYGVA) threads the bilayer.

F-type ATP synthases have 2 components, the catalytic core F(1) and the membrane-embedded component F(0), linked together by a central stalk and a peripheral stalk. The central stalk, also called rotor shaft, is often seen as part of F(1). The peripheral stalk is seen as part of F(0). F(0) contains the membrane channel next to the rotor. F-type ATP synthases form dimers but each monomer functions independently in ATP generation. The dimer consists of 18 different polypeptides: ATP1 (subunit alpha, part of F(1), 3 molecules per monomer), ATP2 (subunit beta, part of F(1), 3 molecules per monomer), ATP3 (subunit gamma, part of the central stalk), ATP4 (subunit b, part of the peripheral stalk), ATP5/OSCP (subunit 5/OSCP, part of the peripheral stalk), ATP6 (subunit a, part of the peripheral stalk), ATP7 (subunit d, part of the peripheral stalk), ATP8 (subunit 8, part of the peripheral stalk), OLI1 (subunit c, part of the rotor, 10 molecules per monomer), ATP14 (subunit h, part of the peripheral stalk), ATP15 (subunit epsilon, part of the central stalk), ATP16 (subunit delta, part of the central stalk), ATP17 (subunit f, part of the peripheral stalk), ATP18 (subunit i/j, part of the peripheral stalk). Dimer-specific subunits are ATP19 (subunit k, at interface between monomers), ATP20 (subunit g, at interface between monomers), TIM11 (subunit e, at interface between monomers). Also contains subunit L.

Its subcellular location is the mitochondrion inner membrane. Mitochondrial membrane ATP synthase (F(1)F(0) ATP synthase or Complex V) produces ATP from ADP in the presence of a proton gradient across the membrane which is generated by electron transport complexes of the respiratory chain. F-type ATP synthases consist of two structural domains, F(1) - containing the extramembraneous catalytic core, and F(0) - containing the membrane proton channel, linked together by a central stalk and a peripheral stalk. During catalysis, ATP synthesis in the catalytic domain of F(1) is coupled via a rotary mechanism of the central stalk subunits to proton translocation. Part of the complex F(0) domain. Minor subunit located with subunit a/ATP6 in the membrane. This chain is ATP synthase subunit J, mitochondrial, found in Pichia angusta (Yeast).